Consider the following 322-residue polypeptide: MKTLDENQAPSRQTPESHRRGAEKLSRIPVKVEPGAPLRKPDWIRVRAGSGDEVRRVKRLLRERGLHSVCEEAACPNLAECFGHGTATFMILGDICTRRCPFCDVAHGRPAPPDPAEPERLAETIALLRLRYVVITSVDRDDLRDGGAAHFAACIRALRTRSPALSVEILTPDFRGRMEIALDLLAADPPDVFNHNIETVPRLYRQARPGADYRQSLELLARFRDKVPGVPTKSGLMLGLGETLDEVREALRDLRGHGCEMLTLGQYLQPSRDHLPVVRYVPPAEFDELAGYARELGFASVASAPLVRSSYHADQQAAIIGR.

A compositionally biased stretch (polar residues) spans 1–14 (MKTLDENQAPSRQT). Residues 1-30 (MKTLDENQAPSRQTPESHRRGAEKLSRIPV) form a disordered region. Over residues 15-26 (PESHRRGAEKLS) the composition is skewed to basic and acidic residues. [4Fe-4S] cluster contacts are provided by C70, C75, C81, C96, C100, C103, and S310. One can recognise a Radical SAM core domain in the interval 82-299 (FGHGTATFMI…AGYARELGFA (218 aa)).

The protein belongs to the radical SAM superfamily. Lipoyl synthase family. The cofactor is [4Fe-4S] cluster.

The protein localises to the cytoplasm. The catalysed reaction is [[Fe-S] cluster scaffold protein carrying a second [4Fe-4S](2+) cluster] + N(6)-octanoyl-L-lysyl-[protein] + 2 oxidized [2Fe-2S]-[ferredoxin] + 2 S-adenosyl-L-methionine + 4 H(+) = [[Fe-S] cluster scaffold protein] + N(6)-[(R)-dihydrolipoyl]-L-lysyl-[protein] + 4 Fe(3+) + 2 hydrogen sulfide + 2 5'-deoxyadenosine + 2 L-methionine + 2 reduced [2Fe-2S]-[ferredoxin]. It participates in protein modification; protein lipoylation via endogenous pathway; protein N(6)-(lipoyl)lysine from octanoyl-[acyl-carrier-protein]: step 2/2. In terms of biological role, catalyzes the radical-mediated insertion of two sulfur atoms into the C-6 and C-8 positions of the octanoyl moiety bound to the lipoyl domains of lipoate-dependent enzymes, thereby converting the octanoylated domains into lipoylated derivatives. This chain is Lipoyl synthase, found in Methylococcus capsulatus (strain ATCC 33009 / NCIMB 11132 / Bath).